The primary structure comprises 331 residues: Glyceraldehyde-3-phosphate dehydrogenase (331 aa).

Residues 12–13, Asp-34, Arg-78, and Thr-120 each bind NAD(+); that span reads RI. Residues 149–151, Thr-180, 209–210, and Arg-232 each bind D-glyceraldehyde 3-phosphate; these read SCT and TG. Cys-150 (nucleophile) is an active-site residue. Residue Asn-314 participates in NAD(+) binding.

Belongs to the glyceraldehyde-3-phosphate dehydrogenase family. Homotetramer.

It is found in the cytoplasm. The catalysed reaction is D-glyceraldehyde 3-phosphate + phosphate + NAD(+) = (2R)-3-phospho-glyceroyl phosphate + NADH + H(+). It functions in the pathway carbohydrate degradation; glycolysis; pyruvate from D-glyceraldehyde 3-phosphate: step 1/5. In terms of biological role, catalyzes the oxidative phosphorylation of glyceraldehyde 3-phosphate (G3P) to 1,3-bisphosphoglycerate (BPG) using the cofactor NAD. The first reaction step involves the formation of a hemiacetal intermediate between G3P and a cysteine residue, and this hemiacetal intermediate is then oxidized to a thioester, with concomitant reduction of NAD to NADH. The reduced NADH is then exchanged with the second NAD, and the thioester is attacked by a nucleophilic inorganic phosphate to produce BPG. The sequence is that of Glyceraldehyde-3-phosphate dehydrogenase (gapA) from Escherichia fergusonii (strain ATCC 35469 / DSM 13698 / CCUG 18766 / IAM 14443 / JCM 21226 / LMG 7866 / NBRC 102419 / NCTC 12128 / CDC 0568-73).